The sequence spans 965 residues: MTISQNPTLDTFKGLFNEAEFVYRHLGSNDAKQADLLSAIGYKDMATFINDTVPEPVRLHKELDLPVAMSEHAALAKLRTMADDITVNKSYIGQGYSPVRMPAVIQRNVLENPGWYTAYTPYQAEIAQGRLEALLNFQQVCIDLTGLELAGASLLDEATAAAEAMAMSKRVSKSKSMQFFVDDRVYSQTLDVINTRAKYFGWEVVVGDFELAKSGDYFGALFQYVGVEGDVKDLTDVIAAVKKNKTYVNVVSDIMSLVLLKSPADMGADVALGSTQRFGIPMGFGGPHAAYFAFSDKAKRSAPGRIIGVSKDSQGNTALRMALQTREQHIRREKANSNICTSQVLLANLAGMYAVYHGPGGVKRIATRIHAFATAFADVIKNANDSNLNVVHDQFFDSVVIDCGSEKLATQIFENADNVGYNLWRLGDSKLSVAFSETSDQEDFKILTQLFVTKAHDLPEDARISLDSTHLRTDDILTHPVFNSHHTEHEMLRYLKSLEDKDLAMNRSMISLGSCTMKLNATSEMLPITWPEFANVHPFAPRDQVTGYVAMIDSLQEQLKAITGFDDVSMQPNSGASGEYAGLLAIRRYHESLGETDRDVCLIPMSAHGTNPATAMMMGMKVVVVKTDDNGNVDIDDLTAKSEEHSARLGALMITYPSTHGVFEEGIRKICDLIHKHGGQVYMDGANMNAQVGMMQPADVGADVLHMNLHKTFCIPHGGGGPGMGPIGMKSHLAPFMANHTLSPVHNAQKDCSAVSAAPYGSASILPISWMYIAMMGRDGLLKATELALLNANYVAAELKDYYPVLYTGKNGRVAHECIIDIRPLKEETGISESDIAKRLMDYGFHSPTMSFPVAGTLMIEPTESESKEELDRFISALKSIKAEAMKAKAGEDNWTLENNPLVNAPHTAAMVIDGEWTYPYSRETAAFPLPYIRTNKFWPSVARVDDAYGDKNLMCSCPSIENYM.

Lys711 is subject to N6-(pyridoxal phosphate)lysine.

It belongs to the GcvP family. As to quaternary structure, the glycine cleavage system is composed of four proteins: P, T, L and H. Requires pyridoxal 5'-phosphate as cofactor.

It carries out the reaction N(6)-[(R)-lipoyl]-L-lysyl-[glycine-cleavage complex H protein] + glycine + H(+) = N(6)-[(R)-S(8)-aminomethyldihydrolipoyl]-L-lysyl-[glycine-cleavage complex H protein] + CO2. Its function is as follows. The glycine cleavage system catalyzes the degradation of glycine. The P protein binds the alpha-amino group of glycine through its pyridoxal phosphate cofactor; CO(2) is released and the remaining methylamine moiety is then transferred to the lipoamide cofactor of the H protein. The sequence is that of Glycine dehydrogenase (decarboxylating) from Psychrobacter arcticus (strain DSM 17307 / VKM B-2377 / 273-4).